Here is a 368-residue protein sequence, read N- to C-terminus: Probable endopolygalacturonase I (368 aa).

The N-terminal stretch at 1 to 18 (MRSVEILGLAALGSLVAA) is a signal peptide. Positions 19 to 31 (APSPSRVSNSAKK) are excised as a propeptide. Residues Cys-35 and Cys-50 are joined by a disulfide bond. 2 PbH1 repeats span residues 162 to 192 (ATNL…DIGE) and 193 to 214 (SNGV…AINS). Asp-207 (proton donor) is an active-site residue. Cys-209 and Cys-225 are disulfide-bonded. Residue His-229 is part of the active site. PbH1 repeat units follow at residues 244–265 (VKNV…RIKT), 273–295 (VGDV…VIEQ), and 307–328 (TTGV…ASNA). Residue Asn-246 is glycosylated (N-linked (GlcNAc...) asparagine). 2 disulfides stabilise this stretch: Cys-335–Cys-340 and Cys-359–Cys-368.

It belongs to the glycosyl hydrolase 28 family.

It is found in the secreted. The catalysed reaction is (1,4-alpha-D-galacturonosyl)n+m + H2O = (1,4-alpha-D-galacturonosyl)n + (1,4-alpha-D-galacturonosyl)m.. Its function is as follows. Involved in maceration and soft-rotting of plant tissue. Hydrolyzes the 1,4-alpha glycosidic bonds of de-esterified pectate in the smooth region of the plant cell wall. The sequence is that of Probable endopolygalacturonase I (pgaI) from Aspergillus clavatus (strain ATCC 1007 / CBS 513.65 / DSM 816 / NCTC 3887 / NRRL 1 / QM 1276 / 107).